Here is a 484-residue protein sequence, read N- to C-terminus: Cobyric acid synthase (484 aa).

The GATase cobBQ-type domain maps to 251–438; sequence ALKIAVPVLP…LHGLFGSDAY (188 aa). The Nucleophile role is filled by C333. Residue H430 is part of the active site.

It belongs to the CobB/CobQ family. CobQ subfamily.

The protein operates within cofactor biosynthesis; adenosylcobalamin biosynthesis. Catalyzes amidations at positions B, D, E, and G on adenosylcobyrinic A,C-diamide. NH(2) groups are provided by glutamine, and one molecule of ATP is hydrogenolyzed for each amidation. In Rhizobium leguminosarum bv. trifolii (strain WSM2304), this protein is Cobyric acid synthase.